A 297-amino-acid chain; its full sequence is Phosphoribosylaminoimidazole-succinocarboxamide synthase (297 aa).

Belongs to the SAICAR synthetase family.

It carries out the reaction 5-amino-1-(5-phospho-D-ribosyl)imidazole-4-carboxylate + L-aspartate + ATP = (2S)-2-[5-amino-1-(5-phospho-beta-D-ribosyl)imidazole-4-carboxamido]succinate + ADP + phosphate + 2 H(+). It functions in the pathway purine metabolism; IMP biosynthesis via de novo pathway; 5-amino-1-(5-phospho-D-ribosyl)imidazole-4-carboxamide from 5-amino-1-(5-phospho-D-ribosyl)imidazole-4-carboxylate: step 1/2. This Corynebacterium diphtheriae (strain ATCC 700971 / NCTC 13129 / Biotype gravis) protein is Phosphoribosylaminoimidazole-succinocarboxamide synthase.